The following is a 201-amino-acid chain: dITP/XTP pyrophosphatase (201 aa).

Substrate is bound at residue 8–13; that stretch reads TNNENK. Residues E41 and D73 each contribute to the Mg(2+) site. D73 serves as the catalytic Proton acceptor. Residues S74, 154–157, K177, and 182–183 each bind substrate; these read FGYD and HR.

The protein belongs to the HAM1 NTPase family. Homodimer. It depends on Mg(2+) as a cofactor.

The catalysed reaction is XTP + H2O = XMP + diphosphate + H(+). The enzyme catalyses dITP + H2O = dIMP + diphosphate + H(+). It carries out the reaction ITP + H2O = IMP + diphosphate + H(+). In terms of biological role, pyrophosphatase that catalyzes the hydrolysis of nucleoside triphosphates to their monophosphate derivatives, with a high preference for the non-canonical purine nucleotides XTP (xanthosine triphosphate), dITP (deoxyinosine triphosphate) and ITP. Seems to function as a house-cleaning enzyme that removes non-canonical purine nucleotides from the nucleotide pool, thus preventing their incorporation into DNA/RNA and avoiding chromosomal lesions. This is dITP/XTP pyrophosphatase from Clostridium tetani (strain Massachusetts / E88).